The sequence spans 389 residues: Exodeoxyribonuclease 7 large subunit (389 aa).

It belongs to the XseA family. In terms of assembly, heterooligomer composed of large and small subunits.

It is found in the cytoplasm. It catalyses the reaction Exonucleolytic cleavage in either 5'- to 3'- or 3'- to 5'-direction to yield nucleoside 5'-phosphates.. In terms of biological role, bidirectionally degrades single-stranded DNA into large acid-insoluble oligonucleotides, which are then degraded further into small acid-soluble oligonucleotides. This Pseudothermotoga lettingae (strain ATCC BAA-301 / DSM 14385 / NBRC 107922 / TMO) (Thermotoga lettingae) protein is Exodeoxyribonuclease 7 large subunit.